The primary structure comprises 299 residues: MAEEQARHVKNGLECIRALKAEPIGSLAIGEAMAAWSEISDNPGQERATYKEEKAGGSGLSKPCLSAIGSTEGGAPRIRGQGSGESDDDTETLGIPSRNLQASSTGLQCHYVYDHSGEAVKGIQDADSIMVQSGLDGDSTLSEGDNESENSDVDIGEPDTEGYAITDRGSAPISMGFRASDVETAEGGEIHELLRLQSRGNNFPKLGKTLNVPPPPDPGRASTSETPIKKGHRREISLIWDGDRVFIDRWCNPMCSKVTLGTIRARCTCGECPRVCEQCRTDTGVDTRIWYHNLPEIPE.

The tract at residues 40 to 91 is disordered; sequence SDNPGQERATYKEEKAGGSGLSKPCLSAIGSTEGGAPRIRGQGSGESDDDTE. Residues 110 to 120 form an interaction with host STAT1 region; it reads HYVYDHSGEAV. The interval 133 to 163 is disordered; the sequence is SGLDGDSTLSEGDNESENSDVDIGEPDTEGY. Over residues 144–160 the composition is skewed to acidic residues; it reads GDNESENSDVDIGEPDT. Histidine 232, cysteine 251, cysteine 255, cysteine 267, cysteine 269, cysteine 272, cysteine 276, and cysteine 279 together coordinate Zn(2+).

Belongs to the paramyxoviruses V protein family. Interacts with host IFIH1/MDA5 and DHX58/LGP2; these interactions are involved in the inhibition of the host type I interferon signaling pathway. Interacts with host TYK2; this interaction inhibits the type I interferon signaling pathway without affecting the type II pathway. Interacts with host IRF7; this interaction inhibits IRF7 translocation to the nucleus. Interacts with host CHUK. Interacts with host RELA/p65; this interaction inhibits the nuclear translocation of NF-KappaB. Interacts (via N-terminus) with host STAT1 and JAK1; these interactions inhibit STAT1 phosphorylation by Jak1 and thereby the type I interferon signaling pathway. Interacts (via C-terminus) with host STAT2; this interaction is involved in the inhibition of the host type I interferon signaling pathway. Forms a complex with host PPP1CA and PPP1CC; this interaction prevents dephosphorylation of host IFIH1/MDA5 and leads to the inhibition of the host type I interferon signaling pathway. Interacts with host IRF9; this interaction prevents the binding of IRF9 to STAT2 and thereby the type I interferon signaling pathway. Interacts with host RIGI regulatory protein (via CARDs domain) and host TRIM25 (via SPRY domain); these interactions prevent TRIM25-mediated ubiquitination of RIG-I and disrupts downstream RIG-I signaling.

Its subcellular location is the host cytoplasm. Functionally, plays an essential role in the inhibition of host immune response. Prevents the establishment of cellular antiviral state by blocking interferon-alpha/beta (IFN-alpha/beta) production and signaling pathway. Interacts with host IFIH1/MDA5 and DHX58/LGP2 to inhibit the transduction pathway involved in the activation of IFN-beta promoter, thus protecting the virus against cell antiviral state. Blocks the type I interferon signaling pathway by interacting with host TYK2 and thereby inhibiting downstream STAT1 and STAT2 phosphorylation. Blocks the type I interferon signaling pathway by disrupting the RIG-I signaling pathway. Moderately affects the type II interferon signaling. Prevents PP1alpha/gamma-mediated dephosphorylation of host IFIH1/MDA5 and thus blocks its activation. This Homo sapiens (Human) protein is Non-structural protein V (P/V).